Reading from the N-terminus, the 789-residue chain is LPS-assembly protein LptD (789 aa).

Residues 1 to 39 (MPPRQLSQTTPSCAVVPRKRRLVAALIAVPGLMPALAHA) form the signal peptide.

This sequence belongs to the LptD family. As to quaternary structure, component of the lipopolysaccharide transport and assembly complex. Interacts with LptE and LptA.

It localises to the cell outer membrane. In terms of biological role, together with LptE, is involved in the assembly of lipopolysaccharide (LPS) at the surface of the outer membrane. This is LPS-assembly protein LptD from Paraburkholderia xenovorans (strain LB400).